The following is a 74-amino-acid chain: Small ribosomal subunit protein bS18 (74 aa).

The protein belongs to the bacterial ribosomal protein bS18 family. Part of the 30S ribosomal subunit. Forms a tight heterodimer with protein bS6.

In terms of biological role, binds as a heterodimer with protein bS6 to the central domain of the 16S rRNA, where it helps stabilize the platform of the 30S subunit. This chain is Small ribosomal subunit protein bS18, found in Gloeobacter violaceus (strain ATCC 29082 / PCC 7421).